A 137-amino-acid chain; its full sequence is Large-conductance mechanosensitive channel (137 aa).

Helical transmembrane passes span 10 to 30 (FAMRGNVVDLAVGVIIGAAFG) and 76 to 96 (GVFIQNVFDFVIVAFAIFVAI).

It belongs to the MscL family. Homopentamer.

Its subcellular location is the cell inner membrane. Channel that opens in response to stretch forces in the membrane lipid bilayer. May participate in the regulation of osmotic pressure changes within the cell. This chain is Large-conductance mechanosensitive channel, found in Salmonella typhimurium (strain LT2 / SGSC1412 / ATCC 700720).